A 426-amino-acid chain; its full sequence is Glutamate-1-semialdehyde 2,1-aminomutase (426 aa).

K265 carries the N6-(pyridoxal phosphate)lysine modification.

The protein belongs to the class-III pyridoxal-phosphate-dependent aminotransferase family. HemL subfamily. In terms of assembly, homodimer. Pyridoxal 5'-phosphate serves as cofactor.

It localises to the cytoplasm. The enzyme catalyses (S)-4-amino-5-oxopentanoate = 5-aminolevulinate. The protein operates within porphyrin-containing compound metabolism; protoporphyrin-IX biosynthesis; 5-aminolevulinate from L-glutamyl-tRNA(Glu): step 2/2. In Escherichia fergusonii (strain ATCC 35469 / DSM 13698 / CCUG 18766 / IAM 14443 / JCM 21226 / LMG 7866 / NBRC 102419 / NCTC 12128 / CDC 0568-73), this protein is Glutamate-1-semialdehyde 2,1-aminomutase.